The following is a 217-amino-acid chain: Putative thymidylate synthase (217 aa).

Cys139 is an active-site residue.

The protein belongs to the thymidylate synthase family. Archaeal-type ThyA subfamily. In terms of assembly, monomer.

The protein localises to the cytoplasm. The protein operates within pyrimidine metabolism; dTTP biosynthesis. In terms of biological role, may catalyze the biosynthesis of dTMP using an unknown cosubstrate. This chain is Putative thymidylate synthase, found in Methanococcoides burtonii (strain DSM 6242 / NBRC 107633 / OCM 468 / ACE-M).